The sequence spans 359 residues: Protein-L-isoaspartate O-methyltransferase domain-containing protein 2 (359 aa).

Glycine 2 carries N-myristoyl glycine lipidation. Serine 64 is a catalytic residue. AdoMet binding motif stretches follow at residues 85–94 (LNLGSGTGYL), 160–164 (YDRVY), and 181–191 (LKVGGILVMPL). The segment at 240–250 (VRSLQDLARLA) is BC-box. Residues 301-328 (SNPSDDTSCEDAEEDRREVAERTLQETK) are disordered. Positions 314–328 (EDRREVAERTLQETK) are enriched in basic and acidic residues. Residues 343 to 346 (LPLP) are CUL-box.

The protein belongs to the methyltransferase superfamily. L-isoaspartyl/D-aspartyl protein methyltransferase family.

The protein localises to the cytoplasm. Its function is as follows. May act as a substrate recognition component of an ECS (Elongin BC-CUL5-SOCS-box protein) E3 ubiquitin ligase complex which mediates the ubiquitination and subsequent proteasomal degradation of target proteins. May bind to the methyltransferase cofactor S-adenosylmethionine (AdoMet) via the N-terminal AdoMet binding motif, but probably does not display methyltransferase activity. In Mus musculus (Mouse), this protein is Protein-L-isoaspartate O-methyltransferase domain-containing protein 2 (Pcmtd2).